The chain runs to 416 residues: Glutamyl-tRNA reductase (416 aa).

Residues 46–49, S97, 102–104, and Q108 contribute to the substrate site; these read TCNR and DHE. Residue C47 is the Nucleophile of the active site. 178–183 provides a ligand contact to NADP(+); the sequence is GAGMAA.

The protein belongs to the glutamyl-tRNA reductase family. Homodimer.

The enzyme catalyses (S)-4-amino-5-oxopentanoate + tRNA(Glu) + NADP(+) = L-glutamyl-tRNA(Glu) + NADPH + H(+). It participates in porphyrin-containing compound metabolism; protoporphyrin-IX biosynthesis; 5-aminolevulinate from L-glutamyl-tRNA(Glu): step 1/2. Functionally, catalyzes the NADPH-dependent reduction of glutamyl-tRNA(Glu) to glutamate 1-semialdehyde (GSA). In Aeropyrum pernix (strain ATCC 700893 / DSM 11879 / JCM 9820 / NBRC 100138 / K1), this protein is Glutamyl-tRNA reductase.